Here is a 359-residue protein sequence, read N- to C-terminus: Aminomethyltransferase (359 aa).

Belongs to the GcvT family. As to quaternary structure, the glycine cleavage system is composed of four proteins: P, T, L and H.

The catalysed reaction is N(6)-[(R)-S(8)-aminomethyldihydrolipoyl]-L-lysyl-[protein] + (6S)-5,6,7,8-tetrahydrofolate = N(6)-[(R)-dihydrolipoyl]-L-lysyl-[protein] + (6R)-5,10-methylene-5,6,7,8-tetrahydrofolate + NH4(+). Its function is as follows. The glycine cleavage system catalyzes the degradation of glycine. This chain is Aminomethyltransferase, found in Synechococcus sp. (strain RCC307).